The following is a 157-amino-acid chain: Transcription elongation factor GreA (157 aa).

The tract at residues 1–60 (MEKVPMTSAGFAALGEELKKRQSEDRPRIIEHIAEARSHGDLSENAEYHAAKEEQSHNEG) is disordered. Over residues 16 to 60 (EELKKRQSEDRPRIIEHIAEARSHGDLSENAEYHAAKEEQSHNEG) the composition is skewed to basic and acidic residues. The stretch at 46-73 (AEYHAAKEEQSHNEGRIAELEDKLARAD) forms a coiled coil.

Belongs to the GreA/GreB family.

Necessary for efficient RNA polymerase transcription elongation past template-encoded arresting sites. The arresting sites in DNA have the property of trapping a certain fraction of elongating RNA polymerases that pass through, resulting in locked ternary complexes. Cleavage of the nascent transcript by cleavage factors such as GreA or GreB allows the resumption of elongation from the new 3'terminus. GreA releases sequences of 2 to 3 nucleotides. This Bradyrhizobium diazoefficiens (strain JCM 10833 / BCRC 13528 / IAM 13628 / NBRC 14792 / USDA 110) protein is Transcription elongation factor GreA.